The sequence spans 751 residues: Zinc finger protein 337 (751 aa).

In terms of domain architecture, KRAB spans 12-83; it reads LAFGDVTVDF…ERRRRPGPCA (72 aa). Positions 101–116 are enriched in low complexity; sequence QRQQQLQFSDQSFQSD. Positions 101-163 are disordered; it reads QRQQQLQFSD…SSQGQRENPT (63 aa). The C2H2-type 1; degenerate zinc finger occupies 180–202; the sequence is FKCAERGQDFSRKMMVIIHKKAH. 9 C2H2-type zinc fingers span residues 208 to 230, 236 to 258, 264 to 286, 292 to 314, 320 to 342, 348 to 370, 376 to 398, 404 to 426, and 432 to 454; these read FTCRECHQGFRDESALLLHQNTH, YVCSVCGRGFSLKANLLRHQRTH, FLCKVCGRGYTSKSYLTVHERTH, YECQECGRRFNDKSSYNKHLKAH, FVCKECGRGYTNKSYFVVHKRIH, YRCQECGRGFSNKSHLITHQRTH, FACRQCKQSFSVKGSLLRHQRTH, FVCKDCERSFSQKSTLVYHQRTH, and FVCRECGQGFIQKSTLVKHQITH. Residue K458 forms a Glycyl lysine isopeptide (Lys-Gly) (interchain with G-Cter in SUMO2) linkage. C2H2-type zinc fingers lie at residues 460–482, 488–510, 516–538, 544–566, 572–594, 600–622, 628–650, 656–679, 685–707, and 713–735; these read FVCKDCGRGFIQKSTFTLHQRTH, YGCRECGRRFRDKSSYNKHLRAH, FFCRDCGRGFTLKPNLTIHQRTH, FMCKQCEKSFSLKANLLRHQWTH, FNCKDCGRGFILKSTLLFHQKTH, FICSECGQGFIWKSNLVKHQLAH, FVCKECGRGFNWKGNLLTHQRTH, FVCNVCGQGFSWKRSLTRHHWRIH, FVCQECKRGYTSKSDLTVHERIH, and YECQECGRKFSNKSYYSKHLKRH.

Belongs to the krueppel C2H2-type zinc-finger protein family.

It localises to the nucleus. In terms of biological role, may be involved in transcriptional regulation. This Homo sapiens (Human) protein is Zinc finger protein 337 (ZNF337).